An 87-amino-acid chain; its full sequence is Retinal rod rhodopsin-sensitive cGMP 3',5'-cyclic phosphodiesterase subunit gamma (87 aa).

Met-1 carries the post-translational modification N-acetylmethionine. Positions 1–12 (MNLEPPKGEIRS) are enriched in basic and acidic residues. Positions 1–55 (MNLEPPKGEIRSATRVIGGPVTPRKGPPKFKQRQTRQFKSKPPKKGVQGFGDDIP) are disordered. Residues 26–44 (GPPKFKQRQTRQFKSKPPK) are compositionally biased toward basic residues.

Belongs to the rod/cone cGMP-PDE gamma subunit family. Oligomer composed of two catalytic chains (alpha and beta), an inhibitory chain (gamma) and the delta chain.

It carries out the reaction 3',5'-cyclic GMP + H2O = GMP + H(+). In terms of biological role, participates in processes of transmission and amplification of the visual signal. cGMP-PDEs are the effector molecules in G-protein-mediated phototransduction in vertebrate rods and cones. This Mus musculus (Mouse) protein is Retinal rod rhodopsin-sensitive cGMP 3',5'-cyclic phosphodiesterase subunit gamma (Pde6g).